Reading from the N-terminus, the 228-residue chain is 2,3-bisphosphoglycerate-dependent phosphoglycerate mutase (228 aa).

Substrate-binding positions include R8–N15, T21–G22, R60, E87–Y90, K98, R114–R115, and G183–N184. H9 serves as the catalytic Tele-phosphohistidine intermediate. E87 functions as the Proton donor/acceptor in the catalytic mechanism.

This sequence belongs to the phosphoglycerate mutase family. BPG-dependent PGAM subfamily.

It carries out the reaction (2R)-2-phosphoglycerate = (2R)-3-phosphoglycerate. Its pathway is carbohydrate degradation; glycolysis; pyruvate from D-glyceraldehyde 3-phosphate: step 3/5. Functionally, catalyzes the interconversion of 2-phosphoglycerate and 3-phosphoglycerate. The sequence is that of 2,3-bisphosphoglycerate-dependent phosphoglycerate mutase from Staphylococcus epidermidis (strain ATCC 35984 / DSM 28319 / BCRC 17069 / CCUG 31568 / BM 3577 / RP62A).